Reading from the N-terminus, the 249-residue chain is Proline-rich antigen (249 aa).

2 stretches are compositionally biased toward pro residues: residues 1 to 20 (MTDQPPPSGSNPTPAPPPPG) and 38 to 87 (YPPP…PPGP). The interval 1 to 87 (MTDQPPPSGS…GAYAPPPPGP (87 aa)) is disordered. The stretch at 34–43 (LGSAYPPPTA) is one 1-1; approximate repeat. A 5 X 10 AA tandem repeats of [PV]-G-G-S-Y-P-P-P-P-P region spans residues 34–85 (LGSAYPPPTAPPVGGSYPPPPPPGGSYPPPPPPGGSYPPPPPSTGAYAPPPP). 3 repeat units span residues 46 to 55 (VGGSYPPPPP), 56 to 65 (PGGSYPPPPP), and 66 to 75 (PGGSYPPPPP). The 1-5; approximate repeat unit spans residues 76 to 85 (STGAYAPPPP). Positions 99–242 (FWVTRVLAYV…KRQTLADKIM (144 aa)) constitute an RDD domain. 2 tandem repeats follow at residues 101-123 (VTRVLAYVIDNIPATVLLGIGML) and 134-156 (VTDITQYNVNQYCATQPTGIGML). Positions 101-156 (VTRVLAYVIDNIPATVLLGIGMLIQTLTKQEACVTDITQYNVNQYCATQPTGIGML) are 2 X 23 AA approximate repeats. Transmembrane regions (helical) follow at residues 104–124 (VLAYVIDNIPATVLLGIGMLI), 151–171 (TGIGMLAFWFAWLMATAYLVW), and 212–232 (LAHFVDAVICCIGFLFPLWDS).

The protein belongs to the mycobacterial Pra family.

It is found in the cell membrane. The polypeptide is Proline-rich antigen (ag36) (Mycobacterium leprae (strain TN)).